Here is a 190-residue protein sequence, read N- to C-terminus: Secretory phospholipase A2 (190 aa).

The N-terminal stretch at 1–15 (MKLAYFSSLLPLALA) is a signal peptide. A disulfide bridge links cysteine 62 with cysteine 78. Ca(2+) is bound at residue alanine 65. Histidine 81 is a catalytic residue. Position 82 (aspartate 82) interacts with Ca(2+).

The protein belongs to the phospholipase A2 family. Ca(2+) serves as cofactor.

The protein localises to the lipid droplet. It is found in the secreted. It catalyses the reaction a 1,2-diacyl-sn-glycero-3-phosphocholine + H2O = a 1-acyl-sn-glycero-3-phosphocholine + a fatty acid + H(+). In terms of biological role, secretory phospholipase that catalyzes the calcium-dependent hydrolysis of the 2-acyl groups in 3-sn-phosphoglycerides. Increases the ability to utilize insect-derived nutrients and lipids, and promotes lipid dropplets accumulation. Plays a role in virulence, including more efficient penetration of the insect cuticle and evasion of host immune response by repressing the expression of host immunity genes. The chain is Secretory phospholipase A2 from Beauveria bassiana (strain ARSEF 2860) (White muscardine disease fungus).